Here is a 506-residue protein sequence, read N- to C-terminus: Procardosin-B (506 aa).

The first 24 residues, 1–24, serve as a signal peptide directing secretion; that stretch reads MGTPIKASLLALFLFFLLSPTAFS. The propeptide occupies 25 to 70; that stretch reads VSNGGLLRVGLKKRKVDRLDQLRAHGVHMLGNARKDFGFRRTLSDS. The Peptidase A1 domain occupies 85–503; sequence YYGEIGIGTP…DYGKLRVGFA (419 aa). Asp-103 is a catalytic residue. Cys-116 and Cys-122 are disulfide-bonded. Residues Asn-139 and Asn-252 are each glycosylated (N-linked (GlcNAc...) asparagine). Cys-281 and Cys-285 are joined by a disulfide. Asp-290 is a catalytic residue. One can recognise a Saposin B-type domain in the interval 315 to 417; sequence VLNQQCKTLV…NEVCDQLPTS (103 aa). Disulfide bonds link Cys-320–Cys-411, Cys-345–Cys-383, Cys-351–Cys-380, and Cys-425–Cys-462. Asn-397 carries an N-linked (GlcNAc...) asparagine glycan.

Belongs to the peptidase A1 family. As to quaternary structure, heterodimer of a light chain and a heavy chain. An intermediate form is produced first, and undergoes proteolytic processing to remove the internal plant-specific insert (PSI) and the propeptide. In terms of tissue distribution, detected in pistils, but not in seeds, bracts, midribs, roots, leaves or stamen extracts. Detected in seeds. In stigmas and styles, detected in the transmitting tissue and in contiguous subepidermal layers at the longitudenal grooves of the stigma (at protein level).

Its subcellular location is the microsome membrane. It localises to the protein storage vacuole. The protein localises to the secreted. The protein resides in the cell wall. It is found in the extracellular space. Its subcellular location is the extracellular matrix. With respect to regulation, inhibited by the specific aspartic proteinase inhibitors diazoacetyl-noleucine methyl ester and pepstatin. In terms of biological role, aspartic protease. Cleaves alpha-lactalbumin but not beta-lactoglobulin. The chain is Procardosin-B from Cynara cardunculus (Cardoon).